The sequence spans 271 residues: Ribosomal RNA small subunit methyltransferase I (271 aa).

The protein belongs to the methyltransferase superfamily. RsmI family.

It localises to the cytoplasm. The enzyme catalyses cytidine(1402) in 16S rRNA + S-adenosyl-L-methionine = 2'-O-methylcytidine(1402) in 16S rRNA + S-adenosyl-L-homocysteine + H(+). Functionally, catalyzes the 2'-O-methylation of the ribose of cytidine 1402 (C1402) in 16S rRNA. The chain is Ribosomal RNA small subunit methyltransferase I from Campylobacter fetus subsp. fetus (strain 82-40).